The following is a 427-amino-acid chain: Serine--tRNA ligase (427 aa).

An L-serine-binding site is contributed by 229-231; that stretch reads TAE. 260–262 is an ATP binding site; the sequence is RSE. An L-serine-binding site is contributed by glutamate 283. 347–350 provides a ligand contact to ATP; sequence EISS. Serine 383 is a binding site for L-serine.

This sequence belongs to the class-II aminoacyl-tRNA synthetase family. Type-1 seryl-tRNA synthetase subfamily. As to quaternary structure, homodimer. The tRNA molecule binds across the dimer.

It is found in the cytoplasm. It catalyses the reaction tRNA(Ser) + L-serine + ATP = L-seryl-tRNA(Ser) + AMP + diphosphate + H(+). The enzyme catalyses tRNA(Sec) + L-serine + ATP = L-seryl-tRNA(Sec) + AMP + diphosphate + H(+). Its pathway is aminoacyl-tRNA biosynthesis; selenocysteinyl-tRNA(Sec) biosynthesis; L-seryl-tRNA(Sec) from L-serine and tRNA(Sec): step 1/1. In terms of biological role, catalyzes the attachment of serine to tRNA(Ser). Is also able to aminoacylate tRNA(Sec) with serine, to form the misacylated tRNA L-seryl-tRNA(Sec), which will be further converted into selenocysteinyl-tRNA(Sec). The sequence is that of Serine--tRNA ligase from Nitrosococcus oceani (strain ATCC 19707 / BCRC 17464 / JCM 30415 / NCIMB 11848 / C-107).